Consider the following 419-residue polypeptide: E3 ubiquitin-protein ligase RNF130 (419 aa).

The N-terminal stretch at 1-27 (MSGAARAGPARLAALALLTCSLWPTRA) is a signal peptide. At 28 to 194 (DNASQEYYTA…MPPKNFSRGS (167 aa)) the chain is on the extracellular side. 6 N-linked (GlcNAc...) asparagine glycosylation sites follow: Asn-29, Asn-40, Asn-112, Asn-135, Asn-172, and Asn-189. Residues 105–176 (IALLQRGNCT…SYLEKNISVQ (72 aa)) enclose the PA domain. A helical membrane pass occupies residues 195-217 (LVFVSISFIVLMIISSAWLIFYF). At 218 to 419 (IQKIRYTNAR…SLNANEVEWF (202 aa)) the chain is on the cytoplasmic side. The RING-type zinc finger occupies 264–305 (CAVCIESYKQNDVVRVLPCKHVFHKSCVDPWLSEHCTCPMCK).

As to expression, expression is highest in liver, with lesser amounts in the lung, spleen, brain, heart, kidney and testis.

The protein resides in the membrane. The protein localises to the cytoplasm. The catalysed reaction is S-ubiquitinyl-[E2 ubiquitin-conjugating enzyme]-L-cysteine + [acceptor protein]-L-lysine = [E2 ubiquitin-conjugating enzyme]-L-cysteine + N(6)-ubiquitinyl-[acceptor protein]-L-lysine.. Its pathway is protein modification; protein ubiquitination. Functionally, acts as an E3 ubiquitin-protein ligase. May have a role during the programmed cell death of hematopoietic cells. The protein is E3 ubiquitin-protein ligase RNF130 of Mus musculus (Mouse).